The sequence spans 1556 residues: Pentafunctional AROM polypeptide (1556 aa).

A 3-dehydroquinate synthase region spans residues Met-1–Asp-387. NAD(+) is bound by residues Asp-46–Asn-48, Glu-84–Lys-87, Gly-115–Val-117, and Asp-120. Arg-131 contacts 7-phospho-2-dehydro-3-deoxy-D-arabino-heptonate. Thr-140–Thr-141 is a binding site for NAD(+). 2 residues coordinate 7-phospho-2-dehydro-3-deoxy-D-arabino-heptonate: Asp-147 and Lys-153. An NAD(+)-binding site is contributed by Lys-162. Asn-163 lines the 7-phospho-2-dehydro-3-deoxy-D-arabino-heptonate pocket. Residues Phe-180–Thr-183 and Asn-191 each bind NAD(+). Glu-195 contributes to the Zn(2+) binding site. Residues Glu-195–Lys-198 and Lys-253 contribute to the 7-phospho-2-dehydro-3-deoxy-D-arabino-heptonate site. Residue Glu-263 is the Proton acceptor; for 3-dehydroquinate synthase activity of the active site. Residues Arg-267–Asn-271 and His-274 contribute to the 7-phospho-2-dehydro-3-deoxy-D-arabino-heptonate site. Residue His-274 coordinates Zn(2+). His-278 serves as the catalytic Proton acceptor; for 3-dehydroquinate synthase activity. 2 residues coordinate 7-phospho-2-dehydro-3-deoxy-D-arabino-heptonate: His-290 and Lys-359. A Zn(2+)-binding site is contributed by His-290. The interval Val-400–Val-837 is EPSP synthase. Cys-819 acts as the For EPSP synthase activity in catalysis. Positions Pro-858 to Ser-1049 are shikimate kinase. Gly-864–Thr-871 provides a ligand contact to ATP. The 3-dehydroquinase stretch occupies residues Leu-1050–Glu-1266. Residue His-1171 is the Proton acceptor; for 3-dehydroquinate dehydratase activity of the active site. Lys-1200 serves as the catalytic Schiff-base intermediate with substrate; for 3-dehydroquinate dehydratase activity. The segment at Lys-1279–Asn-1556 is shikimate dehydrogenase.

It in the N-terminal section; belongs to the sugar phosphate cyclases superfamily. Dehydroquinate synthase family. The protein in the 2nd section; belongs to the EPSP synthase family. This sequence in the 3rd section; belongs to the shikimate kinase family. In the 4th section; belongs to the type-I 3-dehydroquinase family. It in the C-terminal section; belongs to the shikimate dehydrogenase family. In terms of assembly, homodimer. Zn(2+) serves as cofactor.

Its subcellular location is the cytoplasm. The enzyme catalyses 7-phospho-2-dehydro-3-deoxy-D-arabino-heptonate = 3-dehydroquinate + phosphate. It carries out the reaction 3-dehydroquinate = 3-dehydroshikimate + H2O. The catalysed reaction is shikimate + NADP(+) = 3-dehydroshikimate + NADPH + H(+). It catalyses the reaction shikimate + ATP = 3-phosphoshikimate + ADP + H(+). The enzyme catalyses 3-phosphoshikimate + phosphoenolpyruvate = 5-O-(1-carboxyvinyl)-3-phosphoshikimate + phosphate. The protein operates within metabolic intermediate biosynthesis; chorismate biosynthesis; chorismate from D-erythrose 4-phosphate and phosphoenolpyruvate: step 2/7. Its pathway is metabolic intermediate biosynthesis; chorismate biosynthesis; chorismate from D-erythrose 4-phosphate and phosphoenolpyruvate: step 3/7. It functions in the pathway metabolic intermediate biosynthesis; chorismate biosynthesis; chorismate from D-erythrose 4-phosphate and phosphoenolpyruvate: step 4/7. It participates in metabolic intermediate biosynthesis; chorismate biosynthesis; chorismate from D-erythrose 4-phosphate and phosphoenolpyruvate: step 5/7. The protein operates within metabolic intermediate biosynthesis; chorismate biosynthesis; chorismate from D-erythrose 4-phosphate and phosphoenolpyruvate: step 6/7. Its function is as follows. The AROM polypeptide catalyzes 5 consecutive enzymatic reactions in prechorismate polyaromatic amino acid biosynthesis. The protein is Pentafunctional AROM polypeptide of Yarrowia lipolytica (strain CLIB 122 / E 150) (Yeast).